Consider the following 264-residue polypeptide: Fibroblast growth factor 5 (264 aa).

Residues 1 to 20 (MSLSLLFLIFCSHLIHSAWA) form the signal peptide. Residues 25-81 (RLTPEGQPAPPRNPGDSSGSRGRSSATFSSSSASSPVAASPGSQGSGSEHSSFQWSP) are disordered. Residues 38–72 (PGDSSGSRGRSSATFSSSSASSPVAASPGSQGSGS) show a composition bias toward low complexity. N-linked (GlcNAc...) asparagine glycosylation occurs at Asn108. A disordered region spans residues 227–254 (FTVTVPEKKKPPVKPKVPLSQPRRSPSP).

It belongs to the heparin-binding growth factors family. As to quaternary structure, interacts with FGFR1 and FGFR2. Affinity between fibroblast growth factors (FGFs) and their receptors is increased by heparan sulfate glycosaminoglycans that function as coreceptors.

The protein localises to the secreted. Plays an important role in the regulation of cell proliferation and cell differentiation. Required for normal regulation of the hair growth cycle. Functions as an inhibitor of hair elongation by promoting progression from anagen, the growth phase of the hair follicle, into catagen the apoptosis-induced regression phase. The protein is Fibroblast growth factor 5 (Fgf5) of Mus musculus (Mouse).